Reading from the N-terminus, the 475-residue chain is Putative aldehyde dehydrogenase (475 aa).

NAD(+) contacts are provided by residues 146 to 147 (WN) and 223 to 224 (GS). Glu245 functions as the Proton acceptor in the catalytic mechanism. Residue Leu246 participates in NAD(+) binding. Cys279 serves as the catalytic Nucleophile. Residue Glu379 participates in NAD(+) binding.

Belongs to the aldehyde dehydrogenase family.

It carries out the reaction an aldehyde + NAD(+) + H2O = a carboxylate + NADH + 2 H(+). This Staphylococcus aureus (strain USA300) protein is Putative aldehyde dehydrogenase.